The following is a 652-amino-acid chain: Acetyl-coenzyme A synthetase (652 aa).

CoA-binding positions include 191-194 (RAGR), Thr311, and Asn335. Residues 387–389 (GEP), 411–416 (DTWWQT), Asp500, and Arg515 each bind ATP. Ser523 is a binding site for CoA. Residue Arg526 coordinates ATP. Residues Val537, His539, and Ile542 each coordinate Mg(2+). Arg584 is a CoA binding site. N6-acetyllysine is present on Lys609.

This sequence belongs to the ATP-dependent AMP-binding enzyme family. Requires Mg(2+) as cofactor. Acetylated. Deacetylation by the SIR2-homolog deacetylase activates the enzyme.

The enzyme catalyses acetate + ATP + CoA = acetyl-CoA + AMP + diphosphate. In terms of biological role, catalyzes the conversion of acetate into acetyl-CoA (AcCoA), an essential intermediate at the junction of anabolic and catabolic pathways. Acs undergoes a two-step reaction. In the first half reaction, Acs combines acetate with ATP to form acetyl-adenylate (AcAMP) intermediate. In the second half reaction, it can then transfer the acetyl group from AcAMP to the sulfhydryl group of CoA, forming the product AcCoA. Its function is as follows. Enables the cell to use acetate during aerobic growth to generate energy via the TCA cycle, and biosynthetic compounds via the glyoxylate shunt. Acetylates CheY, the response regulator involved in flagellar movement and chemotaxis. The protein is Acetyl-coenzyme A synthetase of Serratia proteamaculans (strain 568).